Consider the following 359-residue polypeptide: Fructose-bisphosphate aldolase class 2 (359 aa).

Ser-61 lines the D-glyceraldehyde 3-phosphate pocket. Asp-110 acts as the Proton donor in catalysis. Positions 111, 145, 175, and 227 each coordinate Zn(2+). Gly-228 is a binding site for dihydroxyacetone phosphate. Residue His-265 participates in Zn(2+) binding. Dihydroxyacetone phosphate contacts are provided by residues 266-268 (GGS) and 287-290 (NIDT).

Belongs to the class II fructose-bisphosphate aldolase family. Zn(2+) is required as a cofactor.

The enzyme catalyses beta-D-fructose 1,6-bisphosphate = D-glyceraldehyde 3-phosphate + dihydroxyacetone phosphate. The protein operates within carbohydrate degradation; glycolysis; D-glyceraldehyde 3-phosphate and glycerone phosphate from D-glucose: step 4/4. Catalyzes the aldol condensation of dihydroxyacetone phosphate (DHAP or glycerone-phosphate) with glyceraldehyde 3-phosphate (G3P) to form fructose 1,6-bisphosphate (FBP) in gluconeogenesis and the reverse reaction in glycolysis. This Buchnera aphidicola subsp. Schizaphis graminum (strain Sg) protein is Fructose-bisphosphate aldolase class 2 (fbaA).